The chain runs to 694 residues: Ribonuclease R (694 aa).

One can recognise an RNB domain in the interval 204-525; that stretch reads RKDLRDLLCF…IVHRLLFHPL (322 aa). One can recognise an S1 motif domain in the interval 571 to 648; sequence ATLYKAFIIT…LTQSIEWTLV (78 aa). Positions 652-694 are disordered; sequence TKAKAKRTSKKKKTESVTTKEKKKSPAKKKKGATKTKKGSGKN. Basic residues-rich tracts occupy residues 654-664 and 672-694; these read AKAKRTSKKKK and EKKKSPAKKKKGATKTKKGSGKN.

Belongs to the RNR ribonuclease family. RNase R subfamily.

It is found in the cytoplasm. It carries out the reaction Exonucleolytic cleavage in the 3'- to 5'-direction to yield nucleoside 5'-phosphates.. Functionally, 3'-5' exoribonuclease that releases 5'-nucleoside monophosphates and is involved in maturation of structured RNAs. The protein is Ribonuclease R of Chlamydia trachomatis serovar D (strain ATCC VR-885 / DSM 19411 / UW-3/Cx).